The following is a 337-amino-acid chain: Large ribosomal subunit protein uL3 (337 aa).

Positions 1 to 26 (MTRHHQPRKGSVAFSPRKRVARETPR) are disordered.

Belongs to the universal ribosomal protein uL3 family. Part of the 50S ribosomal subunit. Forms a cluster with proteins L14 and L24e.

In terms of biological role, one of the primary rRNA binding proteins, it binds directly near the 3'-end of the 23S rRNA, where it nucleates assembly of the 50S subunit. The polypeptide is Large ribosomal subunit protein uL3 (Methanosphaera stadtmanae (strain ATCC 43021 / DSM 3091 / JCM 11832 / MCB-3)).